A 187-amino-acid chain; its full sequence is Calcium and integrin-binding family member 2 (187 aa).

EF-hand domains follow at residues 66 to 101, 103 to 138, and 144 to 179; these read KENP…LSEM, PREL…LTKE, and EVNL…APDF. Asp157, Asp159, Asp161, Lys163, and Asp168 together coordinate Ca(2+).

As to quaternary structure, monomer. Homodimer. In terms of tissue distribution, enriched in central and striolar hair cells.

Its subcellular location is the cytoplasm. The protein resides in the cell projection. It localises to the stereocilium. It is found in the photoreceptor inner segment. The protein localises to the cilium. Its subcellular location is the photoreceptor outer segment. The protein resides in the cell membrane. It localises to the sarcolemma. Calcium- and integrin-binding protein. Plays a role in intracellular calcium homeostasis. Critical for proper photoreceptor cell maintenance and function. Essential for development, maintenance and function of mechanosensory hair cells. This is Calcium and integrin-binding family member 2 from Danio rerio (Zebrafish).